Here is a 905-residue protein sequence, read N- to C-terminus: Toll-like receptor 3 (905 aa).

An N-terminal signal peptide occupies residues 1–25 (MKGCSSYLMYSFGGLLSLWILLVSS). An LRRNT domain is found at 26-52 (TNQCTVRYNVADCSHLKLTHIPDDLPS). Residues 26-705 (TNQCTVRYNV…SCKDSAPFEL (680 aa)) are Lumenal-facing. The cysteines at positions 29 and 38 are disulfide-linked. Residues asparagine 53, asparagine 58, and asparagine 71 are each glycosylated (N-linked (GlcNAc...) asparagine). LRR repeat units lie at residues 53–74 (NITV…NFTR), 77–98 (QLAI…LCQI), 101–122 (LLKV…TFVF), 125–146 (NLTE…PFKN), 149–170 (NLIK…TGVQ), and 173–196 (NLQE…EFLG). Cysteine 96 and cysteine 123 are joined by a disulfide. N-linked (GlcNAc...) asparagine glycosylation is present at asparagine 125. A glycan (N-linked (GlcNAc...) asparagine) is linked at asparagine 197. The LRR 7 repeat unit spans residues 199–220 (SLRKLDLSSNPLKEFSPGCFQT). 4 N-linked (GlcNAc...) asparagine glycosylation sites follow: asparagine 248, asparagine 253, asparagine 276, and asparagine 292. LRR repeat units follow at residues 250-271 (SIQN…TFSG), 276-297 (NLTQ…SFSY), 300-321 (SLRY…SFYG), 324-345 (NLRY…ASHP), 357-378 (YLEY…TFTG), 381-401 (SLKY…TNET), 409-430 (PLLT…TFSW), 433-454 (QLRI…QEWR), 458-479 (NIFE…SFAL), 482-502 (SLQR…SPSP), 508-529 (NLTI…LLEG), 532-553 (NLEI…ANPG), 564-585 (HLHI…VFKN), 588-609 (ELKS…IFDD), and 612-633 (SLRS…VFGP). 3 N-linked (GlcNAc...) asparagine glycosylation sites follow: asparagine 399, asparagine 414, and asparagine 425. Asparagine 508 is a glycosylation site (N-linked (GlcNAc...) asparagine). An LRRCT domain is found at 646 to 699 (NPFDCTCESISWFVNWINQTHTNISELSTHYLCNTPHHYYGFPLKLFDTSSCKD). 2 cysteine pairs are disulfide-bonded: cysteine 650/cysteine 678 and cysteine 652/cysteine 697. Residues asparagine 663 and asparagine 668 are each glycosylated (N-linked (GlcNAc...) asparagine). Residues 706–726 (LFIISTSMLLVFILVVLLIHI) form a helical membrane-spanning segment. Residues 727 to 905 (EGWRISFYWN…VALGSRNSAH (179 aa)) lie on the Cytoplasmic side of the membrane. The TIR domain maps to 755 to 898 (FEYTAYIIHA…AFHHKLQVAL (144 aa)). At tyrosine 760 the chain carries Phosphotyrosine. Residues lysine 766, lysine 813, and lysine 832 each participate in a glycyl lysine isopeptide (Lys-Gly) (interchain with G-Cter in ubiquitin) cross-link. The residue at position 859 (tyrosine 859) is a Phosphotyrosine.

Belongs to the Toll-like receptor family. As to quaternary structure, monomer and homodimer; dimerization is triggered by ligand-binding, the signaling unit is composed of one ds-RNA of around 40 bp and two TLR3 molecules, and lateral clustering of signaling units along the length of the ds-RNA ligand is required for TLR3 signal transduction. Interacts (via transmembrane domain) with UNC93B1; the interaction is required for transport from the ER to the endosomes. Interacts with SRC; upon binding of double-stranded RNA. Interacts with TICAM1 (via the TIR domain) in response to poly(I:C) and this interaction is enhanced in the presence of WDFY1. The tyrosine-phosphorylated form (via TIR domain) interacts with WDFY1 (via WD repeat 2) in response to poly(I:C). Ubiquitinated by RNF170 at Lys-766 via 'Lys-48'-linked ubiquitin chains; leading to TLR3 proteasomal degradation. In terms of processing, TLR3 signaling requires a proteolytic cleavage mediated by cathepsins CTSB and CTSH, the cleavage occurs between amino acids 252 and 346. The cleaved form of TLR3 is the predominant form found in endosomes. Ubiquitinated by TRIM3; leading to recognition and sorting of polyubiquitinated TLR3 by the ESCRT complexes. Ubiquitinated by ZNRF1 via 'Lys-63'-linked ubiquitin chains; leading to TLR3 lysosomal trafficking and degradation. As to expression, highly expressed in lung. After intraperitoneal injection of lipopolysaccharide, highly expressed in brain, heart, kidney, liver, lung and spleen.

Its subcellular location is the endoplasmic reticulum membrane. The protein resides in the endosome membrane. It localises to the early endosome. In terms of biological role, key component of innate and adaptive immunity. TLRs (Toll-like receptors) control host immune response against pathogens through recognition of molecular patterns specific to microorganisms. TLR3 is a nucleotide-sensing TLR which is activated by double-stranded RNA, a sign of viral infection. Acts via the adapter TRIF/TICAM1, leading to NF-kappa-B activation, IRF3 nuclear translocation, cytokine secretion and the inflammatory response. In Mus musculus (Mouse), this protein is Toll-like receptor 3.